Reading from the N-terminus, the 248-residue chain is Small ribosomal subunit protein uS3 (248 aa).

Residues 39–108 (IRKLVSQKLA…TVAVNVAEIP (70 aa)) form the KH type-2 domain. The disordered stretch occupies residues 212–248 (KTETLARPPRKSDERRREDGERPSRRRPTARRRPGGE). Residues 221–234 (RKSDERRREDGERP) are compositionally biased toward basic and acidic residues. Residues 235–248 (SRRRPTARRRPGGE) are compositionally biased toward basic residues.

This sequence belongs to the universal ribosomal protein uS3 family. In terms of assembly, part of the 30S ribosomal subunit. Forms a tight complex with proteins S10 and S14.

Functionally, binds the lower part of the 30S subunit head. Binds mRNA in the 70S ribosome, positioning it for translation. The protein is Small ribosomal subunit protein uS3 of Deinococcus geothermalis (strain DSM 11300 / CIP 105573 / AG-3a).